A 207-amino-acid polypeptide reads, in one-letter code: 8-oxoguanine DNA glycosylase/AP lyase (207 aa).

Residues Lys128 and Asp146 contribute to the active site.

The protein belongs to the type-2 OGG1 family.

It carries out the reaction 2'-deoxyribonucleotide-(2'-deoxyribose 5'-phosphate)-2'-deoxyribonucleotide-DNA = a 3'-end 2'-deoxyribonucleotide-(2,3-dehydro-2,3-deoxyribose 5'-phosphate)-DNA + a 5'-end 5'-phospho-2'-deoxyribonucleoside-DNA + H(+). In terms of biological role, catalyzes the excision of an oxidatively damaged form of guanine (7,8-dihydro-8-oxoguanine = 8-oxoG) from DNA. Also cleaves the DNA backbone at apurinic/apyrimidinic sites (AP sites). This chain is 8-oxoguanine DNA glycosylase/AP lyase, found in Saccharolobus solfataricus (strain ATCC 35092 / DSM 1617 / JCM 11322 / P2) (Sulfolobus solfataricus).